Reading from the N-terminus, the 66-residue chain is DNA-binding protein 7d (66 aa).

N6-methyllysine; partial is present on residues Lys5 and Lys7.

The protein belongs to the 7 kDa DNA-binding/endoribonuclease P2 family. Monomer. In terms of processing, lys-5 was 70% monomethylated in form 7a, 25% in form 7b, and 20% in form 7d. Lys-7 was 50% monomethylated in form 7a, 40% in form 7b, and 50% in form 7d.

It is found in the cytoplasm. Can constrain negative DNA supercoils. May be involved in maintaining the integrity of the genome at high temperature. The chain is DNA-binding protein 7d from Sulfolobus acidocaldarius (strain ATCC 33909 / DSM 639 / JCM 8929 / NBRC 15157 / NCIMB 11770).